Consider the following 1135-residue polypeptide: Peroxisomal ATPase PEX6 (1135 aa).

G853 to T860 serves as a coordination point for ATP.

It belongs to the AAA ATPase family. As to quaternary structure, interacts with PEX1; forming the PEX1-PEX6 AAA ATPase complex, which is composed of a heterohexamer formed by a trimer of PEX1-PEX6 dimers.

It is found in the cytoplasm. Its subcellular location is the cytosol. It localises to the peroxisome membrane. The enzyme catalyses ATP + H2O = ADP + phosphate + H(+). Component of the PEX1-PEX6 AAA ATPase complex, a protein dislocase complex that mediates the ATP-dependent extraction of the PEX5 receptor from peroxisomal membranes, an essential step for PEX5 recycling. Specifically recognizes PEX5 monoubiquitinated at 'Cys-6', and pulls it out of the peroxisome lumen through the PEX2-PEX10-PEX12 retrotranslocation channel. Extraction by the PEX1-PEX6 AAA ATPase complex is accompanied by unfolding of the TPR repeats and release of bound cargo from PEX5. This Pichia angusta (Yeast) protein is Peroxisomal ATPase PEX6 (PEX6).